A 154-amino-acid polypeptide reads, in one-letter code: Ribosome maturation factor RimP (154 aa).

This sequence belongs to the RimP family.

Its subcellular location is the cytoplasm. Functionally, required for maturation of 30S ribosomal subunits. The protein is Ribosome maturation factor RimP of Thioalkalivibrio sulfidiphilus (strain HL-EbGR7).